We begin with the raw amino-acid sequence, 190 residues long: Putative acetyltransferase DDB_G0275913 (190 aa).

It belongs to the transferase hexapeptide repeat family.

In Dictyostelium discoideum (Social amoeba), this protein is Putative acetyltransferase DDB_G0275913.